The chain runs to 129 residues: Large ribosomal subunit protein uL22 (129 aa).

It belongs to the universal ribosomal protein uL22 family. As to quaternary structure, part of the 50S ribosomal subunit.

In terms of biological role, this protein binds specifically to 23S rRNA; its binding is stimulated by other ribosomal proteins, e.g. L4, L17, and L20. It is important during the early stages of 50S assembly. It makes multiple contacts with different domains of the 23S rRNA in the assembled 50S subunit and ribosome. The globular domain of the protein is located near the polypeptide exit tunnel on the outside of the subunit, while an extended beta-hairpin is found that lines the wall of the exit tunnel in the center of the 70S ribosome. This chain is Large ribosomal subunit protein uL22, found in Brucella abortus (strain 2308).